We begin with the raw amino-acid sequence, 244 residues long: Ethylene-responsive transcription factor 1 (244 aa).

The segment at residues 106–164 (HYRGVRQRPWGKFAAEIRDPAKNGARVWLGTYESAEEAALAYGKAAFRMRGTKALLNFP) is a DNA-binding region (AP2/ERF). Over residues 186–198 (SASSSVSSASESG) the composition is skewed to low complexity. The tract at residues 186-214 (SASSSVSSASESGSPKRRRKGVAAKQAEL) is disordered.

The protein belongs to the ethylene-response factor family. Class 1 subfamily. As to expression, present in stems.

It localises to the nucleus. In terms of biological role, involved in the regulation of gene expression during fruit ripening, by stress factors and by components of stress signal transduction pathways. Transcription factor that binds to the GCC-box pathogenesis-related promoter element. Probably acts as a transcriptional activator and may be involved in disease resistance pathways. The sequence is that of Ethylene-responsive transcription factor 1 (ERF1) from Solanum lycopersicum (Tomato).